Consider the following 350-residue polypeptide: Holliday junction branch migration complex subunit RuvB (350 aa).

Residues 1-183 (MSAERLVNPH…FVAVHRLVFY (183 aa)) are large ATPase domain (RuvB-L). ATP is bound by residues L22, R23, G64, K67, T68, S69, 130–132 (EDF), R173, Y183, and R220. A Mg(2+)-binding site is contributed by T68. Residues 184 to 254 (SDAAMTEIVS…VAREALAQLE (71 aa)) are small ATPAse domain (RuvB-S). Residues 257–350 (ELGLDENDRR…ESGPQQGTLF (94 aa)) are head domain (RuvB-H). Residues R312 and R317 each contribute to the DNA site.

This sequence belongs to the RuvB family. As to quaternary structure, homohexamer. Forms an RuvA(8)-RuvB(12)-Holliday junction (HJ) complex. HJ DNA is sandwiched between 2 RuvA tetramers; dsDNA enters through RuvA and exits via RuvB. An RuvB hexamer assembles on each DNA strand where it exits the tetramer. Each RuvB hexamer is contacted by two RuvA subunits (via domain III) on 2 adjacent RuvB subunits; this complex drives branch migration. In the full resolvosome a probable DNA-RuvA(4)-RuvB(12)-RuvC(2) complex forms which resolves the HJ.

The protein localises to the cytoplasm. It carries out the reaction ATP + H2O = ADP + phosphate + H(+). In terms of biological role, the RuvA-RuvB-RuvC complex processes Holliday junction (HJ) DNA during genetic recombination and DNA repair, while the RuvA-RuvB complex plays an important role in the rescue of blocked DNA replication forks via replication fork reversal (RFR). RuvA specifically binds to HJ cruciform DNA, conferring on it an open structure. The RuvB hexamer acts as an ATP-dependent pump, pulling dsDNA into and through the RuvAB complex. RuvB forms 2 homohexamers on either side of HJ DNA bound by 1 or 2 RuvA tetramers; 4 subunits per hexamer contact DNA at a time. Coordinated motions by a converter formed by DNA-disengaged RuvB subunits stimulates ATP hydrolysis and nucleotide exchange. Immobilization of the converter enables RuvB to convert the ATP-contained energy into a lever motion, pulling 2 nucleotides of DNA out of the RuvA tetramer per ATP hydrolyzed, thus driving DNA branch migration. The RuvB motors rotate together with the DNA substrate, which together with the progressing nucleotide cycle form the mechanistic basis for DNA recombination by continuous HJ branch migration. Branch migration allows RuvC to scan DNA until it finds its consensus sequence, where it cleaves and resolves cruciform DNA. This chain is Holliday junction branch migration complex subunit RuvB, found in Chloroflexus aggregans (strain MD-66 / DSM 9485).